A 216-amino-acid chain; its full sequence is Cytochrome c biogenesis ATP-binding export protein CcmA (216 aa).

Positions 11–216 (VSASKLTCIR…RKIRLDYRFV (206 aa)) constitute an ABC transporter domain. 43–50 (GPNGAGKT) serves as a coordination point for ATP.

This sequence belongs to the ABC transporter superfamily. CcmA exporter (TC 3.A.1.107) family. In terms of assembly, the complex is composed of two ATP-binding proteins (CcmA) and two transmembrane proteins (CcmB).

It localises to the cell inner membrane. The enzyme catalyses heme b(in) + ATP + H2O = heme b(out) + ADP + phosphate + H(+). Part of the ABC transporter complex CcmAB involved in the biogenesis of c-type cytochromes; once thought to export heme, this seems not to be the case, but its exact role is uncertain. Responsible for energy coupling to the transport system. This chain is Cytochrome c biogenesis ATP-binding export protein CcmA, found in Shewanella sp. (strain MR-7).